A 372-amino-acid chain; its full sequence is UDP-N-acetylglucosamine--N-acetylmuramyl-(pentapeptide) pyrophosphoryl-undecaprenol N-acetylglucosamine transferase (372 aa).

UDP-N-acetyl-alpha-D-glucosamine-binding positions include 15 to 17, N126, R169, S197, and Q299; that span reads TGG.

It belongs to the glycosyltransferase 28 family. MurG subfamily.

It is found in the cell inner membrane. The catalysed reaction is di-trans,octa-cis-undecaprenyl diphospho-N-acetyl-alpha-D-muramoyl-L-alanyl-D-glutamyl-meso-2,6-diaminopimeloyl-D-alanyl-D-alanine + UDP-N-acetyl-alpha-D-glucosamine = di-trans,octa-cis-undecaprenyl diphospho-[N-acetyl-alpha-D-glucosaminyl-(1-&gt;4)]-N-acetyl-alpha-D-muramoyl-L-alanyl-D-glutamyl-meso-2,6-diaminopimeloyl-D-alanyl-D-alanine + UDP + H(+). The protein operates within cell wall biogenesis; peptidoglycan biosynthesis. Its function is as follows. Cell wall formation. Catalyzes the transfer of a GlcNAc subunit on undecaprenyl-pyrophosphoryl-MurNAc-pentapeptide (lipid intermediate I) to form undecaprenyl-pyrophosphoryl-MurNAc-(pentapeptide)GlcNAc (lipid intermediate II). In Methylobacterium sp. (strain 4-46), this protein is UDP-N-acetylglucosamine--N-acetylmuramyl-(pentapeptide) pyrophosphoryl-undecaprenol N-acetylglucosamine transferase.